We begin with the raw amino-acid sequence, 194 residues long: Protein PHLOEM PROTEIN 2-LIKE A2 (194 aa).

A helical membrane pass occupies residues Val-49–Ser-71.

As to expression, vascular tissues, specifically in phloem companion cell-sieve element complexes.

It is found in the membrane. This Arabidopsis thaliana (Mouse-ear cress) protein is Protein PHLOEM PROTEIN 2-LIKE A2 (PP2A2).